The sequence spans 251 residues: Cytochrome c oxidase subunit 2 (251 aa).

Positions 1–15 (MLDLLRLQLTTFIMN) are cleaved as a propeptide — removed in mature form. Over 16-30 (DVPTPYACYFQDSAT) the chain is Mitochondrial intermembrane. Residues 31 to 64 (PNQEGILELHDNIMFYLLVILGLVSWMLYTIVMT) form a helical membrane-spanning segment. The Mitochondrial matrix portion of the chain corresponds to 65–78 (YSKNPIAYKYIKHG). The chain crosses the membrane as a helical span at residues 79 to 108 (QTIEVIWTIFPAVILLIIAFPSFILLYLCD). The Mitochondrial intermembrane portion of the chain corresponds to 109 to 251 (EVISPAMTIK…PKFLEWLNEQ (143 aa)). Cu cation is bound by residues His-186, Cys-221, Glu-223, Cys-225, His-229, and Met-232. Glu-223 provides a ligand contact to Mg(2+).

The protein belongs to the cytochrome c oxidase subunit 2 family. Component of the cytochrome c oxidase (complex IV, CIV), a multisubunit enzyme composed of 12 subunits. The complex is composed of a catalytic core of 3 subunits COX1, COX2 and COX3, encoded in the mitochondrial DNA, and 9 supernumerary subunits COX4, COX5A (or COX5B), COX6, COX7, COX8, COX9, COX12, COX13 and COX26, which are encoded in the nuclear genome. The complex exists as a monomer or a dimer and forms supercomplexes (SCs) in the inner mitochondrial membrane with a dimer of ubiquinol-cytochrome c oxidoreductase (cytochrome b-c1 complex, complex III, CIII), resulting in 2 different assemblies (supercomplexes III(2)IV and III(2)IV(2)). It depends on Cu cation as a cofactor. The N-terminal sequence of COX2 is processed by IMP1.

It localises to the mitochondrion inner membrane. It catalyses the reaction 4 Fe(II)-[cytochrome c] + O2 + 8 H(+)(in) = 4 Fe(III)-[cytochrome c] + 2 H2O + 4 H(+)(out). Functionally, component of the cytochrome c oxidase, the last enzyme in the mitochondrial electron transport chain which drives oxidative phosphorylation. The respiratory chain contains 3 multisubunit complexes succinate dehydrogenase (complex II, CII), ubiquinol-cytochrome c oxidoreductase (cytochrome b-c1 complex, complex III, CIII) and cytochrome c oxidase (complex IV, CIV), that cooperate to transfer electrons derived from NADH and succinate to molecular oxygen, creating an electrochemical gradient over the inner membrane that drives transmembrane transport and the ATP synthase. Cytochrome c oxidase is the component of the respiratory chain that catalyzes the reduction of oxygen to water. Electrons originating from reduced cytochrome c in the intermembrane space (IMS) are transferred via the dinuclear copper A center (CU(A)) of COX2 and heme A of COX1 to the active site in COX1, a binuclear center (BNC) formed by heme A3 and copper B (CU(B)). The BNC reduces molecular oxygen to 2 water molecules unsing 4 electrons from cytochrome c in the IMS and 4 protons from the mitochondrial matrix. COX2 is a catalytic core subunit which transfers the electrons from cytochrome c via its dinuclear copper A center (CU(A)) to the BNC of the COX1. This is Cytochrome c oxidase subunit 2 (COX2) from Saccharomyces cerevisiae (strain ATCC 204508 / S288c) (Baker's yeast).